Here is a 103-residue protein sequence, read N- to C-terminus: MELIEQVSVAKKANIYFEGKVASRSVFFSDGSKKTLGVVLPGEYEFSTSQGEIMQVTSGSFEVLLPNSTTWQTFSEGSQFELAANVSFKIRNNAIAEYCCSYL.

It belongs to the nucleoside phosphorylase PpnP family.

The catalysed reaction is a purine D-ribonucleoside + phosphate = a purine nucleobase + alpha-D-ribose 1-phosphate. It catalyses the reaction adenosine + phosphate = alpha-D-ribose 1-phosphate + adenine. It carries out the reaction cytidine + phosphate = cytosine + alpha-D-ribose 1-phosphate. The enzyme catalyses guanosine + phosphate = alpha-D-ribose 1-phosphate + guanine. The catalysed reaction is inosine + phosphate = alpha-D-ribose 1-phosphate + hypoxanthine. It catalyses the reaction thymidine + phosphate = 2-deoxy-alpha-D-ribose 1-phosphate + thymine. It carries out the reaction uridine + phosphate = alpha-D-ribose 1-phosphate + uracil. The enzyme catalyses xanthosine + phosphate = alpha-D-ribose 1-phosphate + xanthine. Its function is as follows. Catalyzes the phosphorolysis of diverse nucleosides, yielding D-ribose 1-phosphate and the respective free bases. Can use uridine, adenosine, guanosine, cytidine, thymidine, inosine and xanthosine as substrates. Also catalyzes the reverse reactions. In Shewanella sp. (strain ANA-3), this protein is Pyrimidine/purine nucleoside phosphorylase.